The primary structure comprises 273 residues: Rhamnulose-1-phosphate aldolase (273 aa).

Residue Glu-117 is part of the active site. His-140, His-142, and His-211 together coordinate Zn(2+).

This sequence belongs to the aldolase class II family. RhaD subfamily. It depends on Zn(2+) as a cofactor.

It localises to the cytoplasm. The catalysed reaction is L-rhamnulose 1-phosphate = (S)-lactaldehyde + dihydroxyacetone phosphate. The protein operates within carbohydrate degradation; L-rhamnose degradation; glycerone phosphate from L-rhamnose: step 3/3. Functionally, catalyzes the reversible cleavage of L-rhamnulose-1-phosphate to dihydroxyacetone phosphate (DHAP) and L-lactaldehyde. This Listeria monocytogenes serotype 4a (strain HCC23) protein is Rhamnulose-1-phosphate aldolase.